The following is a 416-amino-acid chain: N-acetylmuramoyl-L-alanine amidase AmiC (416 aa).

Positions 1–26 are cleaved as a signal peptide; that stretch reads MIKLTRRQIIRRTAGTLFALSPIASA. Residues 166-191 are disordered; that stretch reads RGSPEADLAQNTTPQPGRGRNGRRPV. Positions 192-405 constitute a MurNAc-LAA domain; sequence IMLDPGHGGE…CAQSIASGVQ (214 aa).

This sequence belongs to the N-acetylmuramoyl-L-alanine amidase 3 family.

Its subcellular location is the periplasm. The enzyme catalyses Hydrolyzes the link between N-acetylmuramoyl residues and L-amino acid residues in certain cell-wall glycopeptides.. Cell-wall hydrolase involved in septum cleavage during cell division. This Neisseria meningitidis serogroup B (strain ATCC BAA-335 / MC58) protein is N-acetylmuramoyl-L-alanine amidase AmiC (amiC).